The chain runs to 472 residues: 3-isopropylmalate dehydratase large subunit (472 aa).

3 residues coordinate [4Fe-4S] cluster: Cys352, Cys413, and Cys416.

This sequence belongs to the aconitase/IPM isomerase family. LeuC type 1 subfamily. As to quaternary structure, heterodimer of LeuC and LeuD. [4Fe-4S] cluster serves as cofactor.

The enzyme catalyses (2R,3S)-3-isopropylmalate = (2S)-2-isopropylmalate. It functions in the pathway amino-acid biosynthesis; L-leucine biosynthesis; L-leucine from 3-methyl-2-oxobutanoate: step 2/4. In terms of biological role, catalyzes the isomerization between 2-isopropylmalate and 3-isopropylmalate, via the formation of 2-isopropylmaleate. This chain is 3-isopropylmalate dehydratase large subunit, found in Laribacter hongkongensis (strain HLHK9).